A 208-amino-acid polypeptide reads, in one-letter code: Protein-L-isoaspartate O-methyltransferase (208 aa).

Residue S59 is part of the active site.

It belongs to the methyltransferase superfamily. L-isoaspartyl/D-aspartyl protein methyltransferase family.

The protein resides in the cytoplasm. The enzyme catalyses [protein]-L-isoaspartate + S-adenosyl-L-methionine = [protein]-L-isoaspartate alpha-methyl ester + S-adenosyl-L-homocysteine. Its function is as follows. Catalyzes the methyl esterification of L-isoaspartyl residues in peptides and proteins that result from spontaneous decomposition of normal L-aspartyl and L-asparaginyl residues. It plays a role in the repair and/or degradation of damaged proteins. This chain is Protein-L-isoaspartate O-methyltransferase, found in Salmonella newport (strain SL254).